A 347-amino-acid polypeptide reads, in one-letter code: Integrin beta-1-binding protein 2 (347 aa).

Positions 5, 10, 24, and 27 each coordinate Zn(2+). Residues 5-64 (CRNKGCGQHFDPNTNLPDSCCHHPGVPIFHDALKGWSCCRKRTVDFSEFLNIKGCTMGPH) form the CHORD 1 domain. The SH3-binding motif lies at 28–31 (PGVP). 4 residues coordinate Zn(2+): C42, C43, C59, and H64. An SH3-binding motif is present at residues 70–78 (PEAPQPEGP). C149 and C154 together coordinate Zn(2+). The 60-residue stretch at 149-208 (CQNPGCDAVYQGPESDATPCTYHPGAPRFHEGMKSWSCCGIQTLDFGAFLAQPGCRVGRH) folds into the CHORD 2 domain. Positions 158–161 (YQGP) match the SH2-binding motif. Zn(2+) is bound by residues C168 and H171. The SH3-binding motif lies at 172–175 (PGAP). Residues C186, C187, C203, and H208 each coordinate Zn(2+). The CS domain maps to 215 to 304 (PASCRHDWHQ…ADPGSWAQLE (90 aa)). Residues 234–237 (YGQI) carry the SH2-binding motif. Residues 319–347 (LEMDEEESDDSDDDLSWTEEEEEEEAMGE) are disordered. Over residues 320 to 347 (EMDEEESDDSDDDLSWTEEEEEEEAMGE) the composition is skewed to acidic residues.

Interacts with beta-1 integrin subunit. This interaction is regulated by divalent cations, and it occurs only in absence of calcium. Expressed in skeletal and cardiac muscles but not in other tissues.

May play a role during maturation and/or organization of muscles cells. The protein is Integrin beta-1-binding protein 2 (ITGB1BP2) of Homo sapiens (Human).